Consider the following 202-residue polypeptide: Shikimate kinase (202 aa).

20 to 25 (GSGKST) provides a ligand contact to ATP. S24 provides a ligand contact to Mg(2+). Substrate-binding residues include D42, R66, and G88. R126 contributes to the ATP binding site. R153 lines the substrate pocket.

This sequence belongs to the shikimate kinase family. As to quaternary structure, monomer. Mg(2+) serves as cofactor.

The protein resides in the cytoplasm. The catalysed reaction is shikimate + ATP = 3-phosphoshikimate + ADP + H(+). It functions in the pathway metabolic intermediate biosynthesis; chorismate biosynthesis; chorismate from D-erythrose 4-phosphate and phosphoenolpyruvate: step 5/7. Functionally, catalyzes the specific phosphorylation of the 3-hydroxyl group of shikimic acid using ATP as a cosubstrate. The polypeptide is Shikimate kinase (Chlorobium luteolum (strain DSM 273 / BCRC 81028 / 2530) (Pelodictyon luteolum)).